A 246-amino-acid polypeptide reads, in one-letter code: Uridylate kinase (246 aa).

ATP is bound at residue 16–19; it reads KLGG. A UMP-binding site is contributed by glycine 57. ATP contacts are provided by glycine 58 and arginine 62. UMP is bound by residues aspartate 77 and 138 to 145; that span reads MGMPYFST. Residues tyrosine 171 and aspartate 174 each contribute to the ATP site.

The protein belongs to the UMP kinase family. In terms of assembly, homohexamer.

Its subcellular location is the cytoplasm. It carries out the reaction UMP + ATP = UDP + ADP. It functions in the pathway pyrimidine metabolism; CTP biosynthesis via de novo pathway; UDP from UMP (UMPK route): step 1/1. With respect to regulation, inhibited by UTP. Its function is as follows. Catalyzes the reversible phosphorylation of UMP to UDP. The protein is Uridylate kinase of Corynebacterium jeikeium (strain K411).